Reading from the N-terminus, the 366-residue chain is MSEAPLILLAAGGTGGHLFPAEALGVVLMKRGLRVRLVTDSRAMRYSGLFSADMIDVVPSETVRGRTPWALARTGVMLGAGTALAIGLMMRLRPAAVIGFGGYPTLPPLFAARALRIPTLIHDANAVMGRANRLLSRRVSAIATSLPGVLDRDPELAAKTTTTGTPMRPAILAAAAVPFAPLDAEEPLRLLVVGGSQGARVMADIVPGALDELDPALLRRLALTQQVRDEDMSRVRAVYDRLKIACELAPFFSDLPARLAASQLVVSRSGAGTVAELGAIGRPSILVPLPGALDQDQFANAGVLADAGGAIRIVQGDFTSERLAAEITALAADPQKLTAMATAARTVGRLDAADRLADLVMQVARI.

UDP-N-acetyl-alpha-D-glucosamine is bound by residues 14–16 (TGG), Asn125, Arg168, Ser196, and Gln297.

It belongs to the glycosyltransferase 28 family. MurG subfamily.

Its subcellular location is the cell inner membrane. The catalysed reaction is di-trans,octa-cis-undecaprenyl diphospho-N-acetyl-alpha-D-muramoyl-L-alanyl-D-glutamyl-meso-2,6-diaminopimeloyl-D-alanyl-D-alanine + UDP-N-acetyl-alpha-D-glucosamine = di-trans,octa-cis-undecaprenyl diphospho-[N-acetyl-alpha-D-glucosaminyl-(1-&gt;4)]-N-acetyl-alpha-D-muramoyl-L-alanyl-D-glutamyl-meso-2,6-diaminopimeloyl-D-alanyl-D-alanine + UDP + H(+). It participates in cell wall biogenesis; peptidoglycan biosynthesis. Its function is as follows. Cell wall formation. Catalyzes the transfer of a GlcNAc subunit on undecaprenyl-pyrophosphoryl-MurNAc-pentapeptide (lipid intermediate I) to form undecaprenyl-pyrophosphoryl-MurNAc-(pentapeptide)GlcNAc (lipid intermediate II). In Rhodopseudomonas palustris (strain BisB5), this protein is UDP-N-acetylglucosamine--N-acetylmuramyl-(pentapeptide) pyrophosphoryl-undecaprenol N-acetylglucosamine transferase.